Reading from the N-terminus, the 447-residue chain is Probable 7-dehydrocholesterol reductase (447 aa).

Transmembrane regions (helical) follow at residues 24–44 (LTTA…YLIT), 71–91 (IPSF…FQLI), 102–124 (FVPH…LVYY), 133–153 (IITH…PTII), 157–177 (WGSI…LAYF), 244–264 (YVSN…VDFF), 281–301 (FGWM…TLQA), and 309–329 (IDLS…GYII). NADP(+)-binding positions include K337, R341, I367, W372, and 379 to 380 (NY). The chain crosses the membrane as a helical span at residues 393-413 (ACGFSHFIPYFYCVYMTILLV). NADP(+) contacts are provided by residues D419, 423-427 (CSRKY), and Y434.

Belongs to the ERG4/ERG24 family.

It localises to the membrane. It catalyses the reaction cholesterol + NADP(+) = 7-dehydrocholesterol + NADPH + H(+). It participates in steroid biosynthesis; cholesterol biosynthesis. In terms of biological role, catalyzes the last step of the cholesterol synthesis pathway, which transforms cholesta-5,7-dien-3beta-ol (7-dehydrocholesterol,7-DHC) into cholesterol by reducing the C7-C8 double bond of its sterol core. The chain is Probable 7-dehydrocholesterol reductase (DHCR7) from Acanthamoeba polyphaga (Amoeba).